Consider the following 453-residue polypeptide: Bifunctional protein GlmU (453 aa).

Residues 1-227 (MTQDIVILAA…EAEVAGVNDR (227 aa)) are pyrophosphorylase. UDP-N-acetyl-alpha-D-glucosamine contacts are provided by residues 8–11 (LAAG), K22, Q73, 78–79 (GT), 100–102 (YGD), G137, E152, N167, and N225. Residue D102 coordinates Mg(2+). N225 lines the Mg(2+) pocket. The interval 228–248 (VQLAALERELQNQQAVSLMQN) is linker. An N-acetyltransferase region spans residues 249–453 (GATLLDPSRI…KDNWPRPIKK (205 aa)). UDP-N-acetyl-alpha-D-glucosamine-binding residues include R331 and K349. Catalysis depends on H361, which acts as the Proton acceptor. UDP-N-acetyl-alpha-D-glucosamine contacts are provided by Y364 and N375. Residues A378, 384-385 (NY), S403, A421, and R438 each bind acetyl-CoA.

This sequence in the N-terminal section; belongs to the N-acetylglucosamine-1-phosphate uridyltransferase family. It in the C-terminal section; belongs to the transferase hexapeptide repeat family. As to quaternary structure, homotrimer. Mg(2+) serves as cofactor.

The protein localises to the cytoplasm. It catalyses the reaction alpha-D-glucosamine 1-phosphate + acetyl-CoA = N-acetyl-alpha-D-glucosamine 1-phosphate + CoA + H(+). The catalysed reaction is N-acetyl-alpha-D-glucosamine 1-phosphate + UTP + H(+) = UDP-N-acetyl-alpha-D-glucosamine + diphosphate. Its pathway is nucleotide-sugar biosynthesis; UDP-N-acetyl-alpha-D-glucosamine biosynthesis; N-acetyl-alpha-D-glucosamine 1-phosphate from alpha-D-glucosamine 6-phosphate (route II): step 2/2. It functions in the pathway nucleotide-sugar biosynthesis; UDP-N-acetyl-alpha-D-glucosamine biosynthesis; UDP-N-acetyl-alpha-D-glucosamine from N-acetyl-alpha-D-glucosamine 1-phosphate: step 1/1. It participates in bacterial outer membrane biogenesis; LPS lipid A biosynthesis. Its function is as follows. Catalyzes the last two sequential reactions in the de novo biosynthetic pathway for UDP-N-acetylglucosamine (UDP-GlcNAc). The C-terminal domain catalyzes the transfer of acetyl group from acetyl coenzyme A to glucosamine-1-phosphate (GlcN-1-P) to produce N-acetylglucosamine-1-phosphate (GlcNAc-1-P), which is converted into UDP-GlcNAc by the transfer of uridine 5-monophosphate (from uridine 5-triphosphate), a reaction catalyzed by the N-terminal domain. This is Bifunctional protein GlmU from Marinomonas sp. (strain MWYL1).